The following is a 424-amino-acid chain: L-rhamnose isomerase (424 aa).

The Mn(2+) site is built by histidine 261, aspartate 293, and aspartate 295.

Belongs to the rhamnose isomerase family. Requires Mn(2+) as cofactor.

It localises to the cytoplasm. It carries out the reaction L-rhamnopyranose = L-rhamnulose. It participates in carbohydrate degradation; L-rhamnose degradation; glycerone phosphate from L-rhamnose: step 1/3. Functionally, catalyzes the interconversion of L-rhamnose and L-rhamnulose. The sequence is that of L-rhamnose isomerase from Bacillus subtilis (strain 168).